Consider the following 503-residue polypeptide: Cytochrome P450 3A7 (503 aa).

Cys-442 provides a ligand contact to heme.

This sequence belongs to the cytochrome P450 family. Requires heme as cofactor. Expressed in fetal liver (at protein level).

It localises to the endoplasmic reticulum membrane. The protein resides in the microsome membrane. The enzyme catalyses an organic molecule + reduced [NADPH--hemoprotein reductase] + O2 = an alcohol + oxidized [NADPH--hemoprotein reductase] + H2O + H(+). It catalyses the reaction 3beta-hydroxyandrost-5-en-17-one + reduced [NADPH--hemoprotein reductase] + O2 = 3beta,16alpha-dihydroxy-androst-5-en-17-one + oxidized [NADPH--hemoprotein reductase] + H2O + H(+). It carries out the reaction dehydroepiandrosterone 3-sulfate + reduced [NADPH--hemoprotein reductase] + O2 = 16alpha-hydroxydehydroepiandrosterone 3-sulfate + oxidized [NADPH--hemoprotein reductase] + H2O + H(+). The catalysed reaction is testosterone + reduced [NADPH--hemoprotein reductase] + O2 = 6beta,17beta-dihydroxyandrost-4-en-3-one + oxidized [NADPH--hemoprotein reductase] + H2O + H(+). The enzyme catalyses estrone + reduced [NADPH--hemoprotein reductase] + O2 = 2-hydroxyestrone + oxidized [NADPH--hemoprotein reductase] + H2O + H(+). It catalyses the reaction estrone + reduced [NADPH--hemoprotein reductase] + O2 = 4-hydroxyestrone + oxidized [NADPH--hemoprotein reductase] + H2O + H(+). It carries out the reaction estrone + reduced [NADPH--hemoprotein reductase] + O2 = 16alpha-hydroxyestrone + oxidized [NADPH--hemoprotein reductase] + H2O + H(+). The catalysed reaction is 17beta-estradiol + reduced [NADPH--hemoprotein reductase] + O2 = 2-hydroxy-17beta-estradiol + oxidized [NADPH--hemoprotein reductase] + H2O + H(+). The enzyme catalyses 17beta-estradiol + reduced [NADPH--hemoprotein reductase] + O2 = 6beta-hydroxyestradiol-17beta + oxidized [NADPH--hemoprotein reductase] + H2O + H(+). It catalyses the reaction all-trans-retinoate + reduced [NADPH--hemoprotein reductase] + O2 = all-trans-4-hydroxyretinoate + oxidized [NADPH--hemoprotein reductase] + H2O + H(+). It carries out the reaction all-trans-retinoate + reduced [NADPH--hemoprotein reductase] + O2 = all-trans-18-hydroxyretinoate + oxidized [NADPH--hemoprotein reductase] + H2O + H(+). Its pathway is steroid hormone biosynthesis. It participates in cofactor metabolism; retinol metabolism. Functionally, a cytochrome P450 monooxygenase involved in the metabolism of steroid hormones and vitamins during embryogenesis. Mechanistically, uses molecular oxygen inserting one oxygen atom into a substrate, and reducing the second into a water molecule, with two electrons provided by NADPH via cytochrome P450 reductase (NADPH--hemoprotein reductase). Catalyzes the hydroxylation of carbon-hydrogen bonds. Metabolizes 3beta-hydroxyandrost-5-en-17-one (dehydroepiandrosterone, DHEA), a precursor in the biosynthesis of androgen and estrogen steroid hormones. Exhibits high catalytic activity for the formation of hydroxyestrogens from estrone (E1), particularly D-ring hydroxylated estrone at the C16-alpha position. Mainly hydroxylates all trans-retinoic acid (atRA) to 4-hydroxyretinoate and may play a role in atRA clearance during fetal development. Also involved in the oxidative metabolism of xenobiotics including anticonvulsants. The protein is Cytochrome P450 3A7 of Homo sapiens (Human).